The primary structure comprises 235 residues: RNA-free ribonuclease P (235 aa).

It belongs to the HARP family.

It carries out the reaction Endonucleolytic cleavage of RNA, removing 5'-extranucleotides from tRNA precursor.. Its function is as follows. RNA-free RNase P that catalyzes the removal of the 5'-leader sequence from pre-tRNA to produce the mature 5'-terminus. The chain is RNA-free ribonuclease P from Methanothrix thermoacetophila (strain DSM 6194 / JCM 14653 / NBRC 101360 / PT) (Methanosaeta thermophila).